The following is a 529-amino-acid chain: UDP-glucuronosyltransferase 2B23 (529 aa).

An N-terminal signal peptide occupies residues 1–24 (MSVKWTSVILLIQLSFYFSSGSCG). 2 N-linked (GlcNAc...) asparagine glycosylation sites follow: Asn67 and Asn68. Residues 494–514 (IGFLLACVATVIFIIMKCCLF) traverse the membrane as a helical segment.

The protein belongs to the UDP-glycosyltransferase family. As to expression, expressed in several tissues, including the prostate, mammary gland, epididymis, testis and ovary.

The protein resides in the microsome membrane. It localises to the endoplasmic reticulum membrane. It carries out the reaction glucuronate acceptor + UDP-alpha-D-glucuronate = acceptor beta-D-glucuronoside + UDP + H(+). UDPGTs are of major importance in the conjugation and subsequent elimination of potentially toxic xenobiotics and endogenous compounds. This isozyme has glucuronidating capacity on 6 steroids and the bile acid, hyodeoxycholic acid. May potentially play an important role in estrogen and androgen catabolism in peripheral steroid target tissues. The sequence is that of UDP-glucuronosyltransferase 2B23 (UGT2B23) from Macaca fascicularis (Crab-eating macaque).